The sequence spans 117 residues: Ig heavy chain V region 186-1 (117 aa).

A signal peptide spans 1-19 (MGWSCIMLFLAATATGVHS). The framework-1 stretch occupies residues 20-49 (QVQLQQPGAELVKPGASVKLSCKASGYTFT). An intrachain disulfide couples Cys-41 to Cys-115. The complementarity-determining-1 stretch occupies residues 50 to 54 (SYWMH). The interval 55–68 (WVKQRPGRGLEWIG) is framework-2. Residues 69 to 85 (RIDPNSGGTKYNEKFKS) are complementarity-determining-2. The framework-3 stretch occupies residues 86–117 (KATLTVDTSSSTAYMQLHSLTSEDSAVYYCAR).

The sequence is that of Ig heavy chain V region 186-1 from Mus musculus (Mouse).